We begin with the raw amino-acid sequence, 240 residues long: Ribonuclease PH (240 aa).

Residues Arg87 and 125–127 (GTR) contribute to the phosphate site.

It belongs to the RNase PH family. Homohexameric ring arranged as a trimer of dimers.

The catalysed reaction is tRNA(n+1) + phosphate = tRNA(n) + a ribonucleoside 5'-diphosphate. In terms of biological role, phosphorolytic 3'-5' exoribonuclease that plays an important role in tRNA 3'-end maturation. Removes nucleotide residues following the 3'-CCA terminus of tRNAs; can also add nucleotides to the ends of RNA molecules by using nucleoside diphosphates as substrates, but this may not be physiologically important. Probably plays a role in initiation of 16S rRNA degradation (leading to ribosome degradation) during starvation. The polypeptide is Ribonuclease PH (Pseudomonas fluorescens (strain SBW25)).